A 184-amino-acid polypeptide reads, in one-letter code: SsrA-binding protein (184 aa).

Residues 1-11 (MAAKKSTPTDS) are compositionally biased toward polar residues. Residues 1–31 (MAAKKSTPTDSGKSKGKKNKAQKGAGQKGAG) form a disordered region.

It belongs to the SmpB family.

The protein localises to the cytoplasm. Functionally, required for rescue of stalled ribosomes mediated by trans-translation. Binds to transfer-messenger RNA (tmRNA), required for stable association of tmRNA with ribosomes. tmRNA and SmpB together mimic tRNA shape, replacing the anticodon stem-loop with SmpB. tmRNA is encoded by the ssrA gene; the 2 termini fold to resemble tRNA(Ala) and it encodes a 'tag peptide', a short internal open reading frame. During trans-translation Ala-aminoacylated tmRNA acts like a tRNA, entering the A-site of stalled ribosomes, displacing the stalled mRNA. The ribosome then switches to translate the ORF on the tmRNA; the nascent peptide is terminated with the 'tag peptide' encoded by the tmRNA and targeted for degradation. The ribosome is freed to recommence translation, which seems to be the essential function of trans-translation. This Corynebacterium jeikeium (strain K411) protein is SsrA-binding protein.